A 180-amino-acid polypeptide reads, in one-letter code: Large ribosomal subunit protein uL6 (180 aa).

It belongs to the universal ribosomal protein uL6 family. In terms of assembly, part of the 50S ribosomal subunit.

In terms of biological role, this protein binds to the 23S rRNA, and is important in its secondary structure. It is located near the subunit interface in the base of the L7/L12 stalk, and near the tRNA binding site of the peptidyltransferase center. The polypeptide is Large ribosomal subunit protein uL6 (Clostridium botulinum (strain Okra / Type B1)).